The chain runs to 217 residues: Mucosal pentraxin (217 aa).

An N-terminal signal peptide occupies residues 1–19 (MEKLLLGVLLLAFLPEGMT). Residues 24 to 217 (RGKVFIFPEQ…KGYVVVKPKL (194 aa)) form the Pentraxin (PTX) domain. Cys-55 and Cys-114 are oxidised to a cystine. Ca(2+) is bound by residues Asp-77, Asn-78, Glu-155, Gln-156, Asp-157, and Gln-167.

The protein belongs to the pentraxin family. As to quaternary structure, homopentamer. Pentraxin (or pentaxin) have a discoid arrangement of 5 non-covalently bound subunits. Ca(2+) is required as a cofactor.

Its subcellular location is the secreted. The protein is Mucosal pentraxin (MPTX) of Bos taurus (Bovine).